We begin with the raw amino-acid sequence, 497 residues long: Putative diacyglycerol O-acyltransferase MT3584 (497 aa).

H143 serves as the catalytic Proton acceptor.

Belongs to the long-chain O-acyltransferase family.

The catalysed reaction is an acyl-CoA + a 1,2-diacyl-sn-glycerol = a triacyl-sn-glycerol + CoA. Its pathway is glycerolipid metabolism; triacylglycerol biosynthesis. This is Putative diacyglycerol O-acyltransferase MT3584 from Mycobacterium tuberculosis (strain CDC 1551 / Oshkosh).